Reading from the N-terminus, the 89-residue chain is Small ribosomal subunit protein uS15 (89 aa).

Belongs to the universal ribosomal protein uS15 family. In terms of assembly, part of the 30S ribosomal subunit. Forms a bridge to the 50S subunit in the 70S ribosome, contacting the 23S rRNA.

In terms of biological role, one of the primary rRNA binding proteins, it binds directly to 16S rRNA where it helps nucleate assembly of the platform of the 30S subunit by binding and bridging several RNA helices of the 16S rRNA. Functionally, forms an intersubunit bridge (bridge B4) with the 23S rRNA of the 50S subunit in the ribosome. The chain is Small ribosomal subunit protein uS15 from Ureaplasma parvum serovar 3 (strain ATCC 27815 / 27 / NCTC 11736).